The primary structure comprises 479 residues: Glycogen synthase (479 aa).

Residue lysine 15 coordinates ADP-alpha-D-glucose.

This sequence belongs to the glycosyltransferase 1 family. Bacterial/plant glycogen synthase subfamily.

It carries out the reaction [(1-&gt;4)-alpha-D-glucosyl](n) + ADP-alpha-D-glucose = [(1-&gt;4)-alpha-D-glucosyl](n+1) + ADP + H(+). It participates in glycan biosynthesis; glycogen biosynthesis. In terms of biological role, synthesizes alpha-1,4-glucan chains using ADP-glucose. The polypeptide is Glycogen synthase (Acidiphilium cryptum (strain JF-5)).